Reading from the N-terminus, the 155-residue chain is Photosystem I reaction center subunit XI (155 aa).

Helical transmembrane passes span 80 to 102 and 117 to 139; these read LISG…LVSF and GWSQ…AFFL.

This sequence belongs to the PsaL family.

The protein localises to the cellular thylakoid membrane. The polypeptide is Photosystem I reaction center subunit XI (Thermosynechococcus vestitus (strain NIES-2133 / IAM M-273 / BP-1)).